We begin with the raw amino-acid sequence, 278 residues long: MTVLHSVDFFPSCNASVAIEPRLPQADFPEHHHDFHEIVIVEHGTGIHVFNGQPYTITGGTVCFVRDHDRHLYEHTDNLCLTNVLYRSPDRFQFLAGLNQLLPQELDGQYPSHWRVNHSVLQQVRQLVAQMEQQEGENDLPSTASREILFMQLLLLLRKSSLQENLENSASRLNLLLAWLEDHFADEVNWDAVADQFSLSLRTLHRQLKQQTGLTPQRYLNRLRLMKARHLLRHSEASVTDIAYRCGFSDSNHFSTLFRREFNWSPRDIRQGRDGFLQ.

The HTH araC/xylS-type domain occupies 174–272 (NLLLAWLEDH…NWSPRDIRQG (99 aa)). 2 consecutive DNA-binding regions (H-T-H motif) follow at residues 191 to 212 (DAVA…KQQT) and 239 to 262 (VTDI…RREF).

As to quaternary structure, binds DNA as a dimer.

The protein resides in the cytoplasm. In terms of biological role, activates expression of the rhaBAD and rhaT operons. The chain is HTH-type transcriptional activator RhaS from Shigella flexneri serotype 5b (strain 8401).